The following is a 122-amino-acid chain: Large ribosomal subunit protein uL14c (122 aa).

It belongs to the universal ribosomal protein uL14 family. In terms of assembly, part of the 50S ribosomal subunit.

Its subcellular location is the plastid. The protein localises to the chloroplast. Binds to 23S rRNA. This is Large ribosomal subunit protein uL14c from Gnetum parvifolium (Small-leaved jointfir).